The primary structure comprises 330 residues: Putative protein N-methyltransferase FAM86B1 (330 aa).

S-adenosyl-L-methionine is bound by residues Trp-139, 165–167 (GSG), Trp-228, and Ala-247.

This sequence belongs to the class I-like SAM-binding methyltransferase superfamily. EEF2KMT family.

In Homo sapiens (Human), this protein is Putative protein N-methyltransferase FAM86B1.